A 433-amino-acid polypeptide reads, in one-letter code: 4-hydroxy-3-methylbut-2-en-1-yl diphosphate synthase (flavodoxin) (433 aa).

Positions 1–10 (MRYMQDSSMP) are enriched in polar residues. A disordered region spans residues 1-24 (MRYMQDSSMPCQDASPPDVGAAPR). [4Fe-4S] cluster contacts are provided by Cys-320, Cys-323, Cys-366, and Glu-373.

It belongs to the IspG family. Requires [4Fe-4S] cluster as cofactor.

It carries out the reaction (2E)-4-hydroxy-3-methylbut-2-enyl diphosphate + oxidized [flavodoxin] + H2O + 2 H(+) = 2-C-methyl-D-erythritol 2,4-cyclic diphosphate + reduced [flavodoxin]. The protein operates within isoprenoid biosynthesis; isopentenyl diphosphate biosynthesis via DXP pathway; isopentenyl diphosphate from 1-deoxy-D-xylulose 5-phosphate: step 5/6. Functionally, converts 2C-methyl-D-erythritol 2,4-cyclodiphosphate (ME-2,4cPP) into 1-hydroxy-2-methyl-2-(E)-butenyl 4-diphosphate. The sequence is that of 4-hydroxy-3-methylbut-2-en-1-yl diphosphate synthase (flavodoxin) from Bordetella bronchiseptica (strain ATCC BAA-588 / NCTC 13252 / RB50) (Alcaligenes bronchisepticus).